An 830-amino-acid chain; its full sequence is Protein translocase subunit SecA (830 aa).

ATP contacts are provided by residues Q86, 104–108, and D491; that span reads GEGKT. Zn(2+) contacts are provided by C813, C815, C824, and C825.

The protein belongs to the SecA family. Monomer and homodimer. Part of the essential Sec protein translocation apparatus which comprises SecA, SecYEG and auxiliary proteins SecDF. Other proteins may also be involved. It depends on Zn(2+) as a cofactor.

It is found in the cell membrane. Its subcellular location is the cytoplasm. It carries out the reaction ATP + H2O + cellular proteinSide 1 = ADP + phosphate + cellular proteinSide 2.. In terms of biological role, part of the Sec protein translocase complex. Interacts with the SecYEG preprotein conducting channel. Has a central role in coupling the hydrolysis of ATP to the transfer of proteins into and across the cell membrane, serving as an ATP-driven molecular motor driving the stepwise translocation of polypeptide chains across the membrane. This chain is Protein translocase subunit SecA, found in Syntrophomonas wolfei subsp. wolfei (strain DSM 2245B / Goettingen).